A 224-amino-acid chain; its full sequence is Response regulator protein GraR (224 aa).

The Response regulatory domain occupies 2–115 (QILLVEDDNT…VLIAKLQAIY (114 aa)). The residue at position 51 (Asp-51) is a 4-aspartylphosphate. Positions 126–224 (KRTLSWQDAT…KVGKGYLAHE (99 aa)) form a DNA-binding region, ompR/PhoB-type.

Phosphorylated by GraS.

It is found in the cytoplasm. Member of the two-component regulatory system GraR/GraS involved in resistance against cationic antimicrobial peptides (CAMPs). The polypeptide is Response regulator protein GraR (graR) (Staphylococcus epidermidis (strain ATCC 35984 / DSM 28319 / BCRC 17069 / CCUG 31568 / BM 3577 / RP62A)).